We begin with the raw amino-acid sequence, 459 residues long: Cysteine--tRNA ligase (459 aa).

Residue Cys28 participates in Zn(2+) binding. The short motif at 30 to 40 (ITVYDLCHVGH) is the 'HIGH' region element. 3 residues coordinate Zn(2+): Cys209, His234, and Glu238. The 'KMSKS' region motif lies at 266 to 270 (KMSKS). Lys269 contacts ATP.

It belongs to the class-I aminoacyl-tRNA synthetase family. Monomer. Zn(2+) serves as cofactor.

The protein resides in the cytoplasm. The enzyme catalyses tRNA(Cys) + L-cysteine + ATP = L-cysteinyl-tRNA(Cys) + AMP + diphosphate. This Pasteurella multocida (strain Pm70) protein is Cysteine--tRNA ligase (cysS).